A 363-amino-acid polypeptide reads, in one-letter code: 3,4-dihydroxy-2-butanone 4-phosphate synthase (363 aa).

Residues 1–202 (MSHISPIPEI…ITDLIEYRSR (202 aa)) are DHBP synthase. Residues 28-29 (RE), Asp-33, 141-145 (RAGHT), and Glu-165 each bind D-ribulose 5-phosphate. Glu-29 is a Mg(2+) binding site. His-144 contacts Mg(2+). The segment at 205–363 (SLLEDMGNAP…EVVGFEEAEK (159 aa)) is GTP cyclohydrolase II-like.

This sequence in the N-terminal section; belongs to the DHBP synthase family. In the C-terminal section; belongs to the GTP cyclohydrolase II family. Mg(2+) is required as a cofactor. Mn(2+) serves as cofactor.

It carries out the reaction D-ribulose 5-phosphate = (2S)-2-hydroxy-3-oxobutyl phosphate + formate + H(+). It functions in the pathway cofactor biosynthesis; riboflavin biosynthesis; 2-hydroxy-3-oxobutyl phosphate from D-ribulose 5-phosphate: step 1/1. Functionally, catalyzes the conversion of D-ribulose 5-phosphate to formate and 3,4-dihydroxy-2-butanone 4-phosphate. In Neisseria meningitidis serogroup A / serotype 4A (strain DSM 15465 / Z2491), this protein is 3,4-dihydroxy-2-butanone 4-phosphate synthase (ribB).